A 423-amino-acid chain; its full sequence is Glutamate-1-semialdehyde 2,1-aminomutase (423 aa).

Lysine 258 carries the post-translational modification N6-(pyridoxal phosphate)lysine.

The protein belongs to the class-III pyridoxal-phosphate-dependent aminotransferase family. HemL subfamily. Pyridoxal 5'-phosphate is required as a cofactor.

The protein localises to the cytoplasm. The catalysed reaction is (S)-4-amino-5-oxopentanoate = 5-aminolevulinate. Its pathway is porphyrin-containing compound metabolism; protoporphyrin-IX biosynthesis; 5-aminolevulinate from L-glutamyl-tRNA(Glu): step 2/2. In Pyrobaculum aerophilum (strain ATCC 51768 / DSM 7523 / JCM 9630 / CIP 104966 / NBRC 100827 / IM2), this protein is Glutamate-1-semialdehyde 2,1-aminomutase.